The chain runs to 407 residues: NAD(P)H-quinone oxidoreductase subunit 1 (407 aa).

The next 9 membrane-spanning stretches (helical) occupy residues 28 to 48 (WLPL…IAAV), 96 to 116 (WLFT…YLVI), 127 to 147 (ITIG…GALM), 175 to 195 (LALS…VDIV), 203 to 223 (LFSF…IFLI), 267 to 287 (LILA…FIVP), 309 to 329 (ALVG…LAIL), 347 to 367 (WKFL…LVLL), and 374 to 394 (TLPL…AMSL).

This sequence belongs to the complex I subunit 1 family. NDH-1 is composed of at least 11 different subunits.

It is found in the cell inner membrane. The enzyme catalyses a plastoquinone + NADH + (n+1) H(+)(in) = a plastoquinol + NAD(+) + n H(+)(out). The catalysed reaction is a plastoquinone + NADPH + (n+1) H(+)(in) = a plastoquinol + NADP(+) + n H(+)(out). In terms of biological role, NDH-1 shuttles electrons from an unknown electron donor, via FMN and iron-sulfur (Fe-S) centers, to quinones in the respiratory and/or the photosynthetic chain. The immediate electron acceptor for the enzyme in this species is believed to be plastoquinone. Couples the redox reaction to proton translocation, and thus conserves the redox energy in a proton gradient. The sequence is that of NAD(P)H-quinone oxidoreductase subunit 1 from Gloeobacter violaceus (strain ATCC 29082 / PCC 7421).